Reading from the N-terminus, the 190-residue chain is MSRALLKYIRLSPTKARLVARQVQGMNAEIAIASLEFTPNKAARVISKVIASAVANGGYDAQDVIILSCRVDAGPVLRRFMPRAKGRATPIRKPMAHILVEVGTQKSVQQSVQSTKAKAKGAKNIKSEDSKNSLKVTESKADSKVDAAQKASTTQEKAESKTKVAKAKVATTKSTATRKTTKKKTEGEEK.

The tract at residues 111 to 190 (SVQSTKAKAK…TKKKTEGEEK (80 aa)) is disordered. The segment covering 125-147 (IKSEDSKNSLKVTESKADSKVDA) has biased composition (basic and acidic residues). Low complexity predominate over residues 167–178 (AKVATTKSTATR).

The protein belongs to the universal ribosomal protein uL22 family. As to quaternary structure, part of the 50S ribosomal subunit.

Its function is as follows. This protein binds specifically to 23S rRNA; its binding is stimulated by other ribosomal proteins, e.g. L4, L17, and L20. It is important during the early stages of 50S assembly. It makes multiple contacts with different domains of the 23S rRNA in the assembled 50S subunit and ribosome. In terms of biological role, the globular domain of the protein is located near the polypeptide exit tunnel on the outside of the subunit, while an extended beta-hairpin is found that lines the wall of the exit tunnel in the center of the 70S ribosome. The protein is Large ribosomal subunit protein uL22 of Helicobacter hepaticus (strain ATCC 51449 / 3B1).